Reading from the N-terminus, the 311-residue chain is Protoheme IX farnesyltransferase 1 (311 aa).

Helical transmembrane passes span 31-51 (VMAL…GAVN), 52-72 (PVIA…AGAL), 97-117 (VTPG…VMTL), 119-139 (VLVG…YIVI), 152-172 (IVIG…AATG), 179-199 (LVLF…LALF), 225-245 (ILAY…FGFT), 247-267 (GYYG…SWKV), and 281-301 (LFAY…ADTI).

Belongs to the UbiA prenyltransferase family. Protoheme IX farnesyltransferase subfamily.

The protein resides in the cell inner membrane. It carries out the reaction heme b + (2E,6E)-farnesyl diphosphate + H2O = Fe(II)-heme o + diphosphate. It participates in porphyrin-containing compound metabolism; heme O biosynthesis; heme O from protoheme: step 1/1. Functionally, converts heme B (protoheme IX) to heme O by substitution of the vinyl group on carbon 2 of heme B porphyrin ring with a hydroxyethyl farnesyl side group. The sequence is that of Protoheme IX farnesyltransferase 1 from Mesorhizobium japonicum (strain LMG 29417 / CECT 9101 / MAFF 303099) (Mesorhizobium loti (strain MAFF 303099)).